The primary structure comprises 155 residues: MFTIDFSDHTGLVETSWFDQIDQLLTFAKKKENIHNDAELSVTFVDKDEIQNINKVYRDKDKVTDVISFALEEDEPEIDFNDFDIPRVLGDIIICTDVAKEQSESYGHSFERELGFLALHGFLHLLGYDHMNDNDEKEMFGRQDAILNEFGLTRN.

3 residues coordinate Zn(2+): histidine 120, histidine 124, and histidine 130.

It belongs to the endoribonuclease YbeY family. It depends on Zn(2+) as a cofactor.

It is found in the cytoplasm. Its function is as follows. Single strand-specific metallo-endoribonuclease involved in late-stage 70S ribosome quality control and in maturation of the 3' terminus of the 16S rRNA. The polypeptide is Endoribonuclease YbeY (Staphylococcus epidermidis (strain ATCC 12228 / FDA PCI 1200)).